The sequence spans 48 residues: ATP synthase protein 8 (48 aa).

The chain crosses the membrane as a helical span at residues 16-36; the sequence is GFLLMTILLVLFSQFFLPMIL.

It belongs to the ATPase protein 8 family. As to quaternary structure, F-type ATPases have 2 components, CF(1) - the catalytic core - and CF(0) - the membrane proton channel.

It localises to the mitochondrion membrane. Mitochondrial membrane ATP synthase (F(1)F(0) ATP synthase or Complex V) produces ATP from ADP in the presence of a proton gradient across the membrane which is generated by electron transport complexes of the respiratory chain. F-type ATPases consist of two structural domains, F(1) - containing the extramembraneous catalytic core and F(0) - containing the membrane proton channel, linked together by a central stalk and a peripheral stalk. During catalysis, ATP synthesis in the catalytic domain of F(1) is coupled via a rotary mechanism of the central stalk subunits to proton translocation. Part of the complex F(0) domain. Minor subunit located with subunit a in the membrane. This is ATP synthase protein 8 (ATP8) from Vanderwaltozyma polyspora (strain ATCC 22028 / DSM 70294 / BCRC 21397 / CBS 2163 / NBRC 10782 / NRRL Y-8283 / UCD 57-17) (Kluyveromyces polysporus).